A 264-amino-acid chain; its full sequence is Type III pantothenate kinase 2 (264 aa).

Position 6–13 (6–13 (DVGNTFTV)) interacts with ATP. Residues Y100 and 107 to 110 (GADR) each bind substrate. D109 functions as the Proton acceptor in the catalytic mechanism. K(+) is bound at residue D129. T132 provides a ligand contact to ATP. T184 is a binding site for substrate.

Belongs to the type III pantothenate kinase family. In terms of assembly, homodimer. NH4(+) serves as cofactor. The cofactor is K(+).

The protein resides in the cytoplasm. The catalysed reaction is (R)-pantothenate + ATP = (R)-4'-phosphopantothenate + ADP + H(+). The protein operates within cofactor biosynthesis; coenzyme A biosynthesis; CoA from (R)-pantothenate: step 1/5. Catalyzes the phosphorylation of pantothenate (Pan), the first step in CoA biosynthesis. The polypeptide is Type III pantothenate kinase 2 (Symbiobacterium thermophilum (strain DSM 24528 / JCM 14929 / IAM 14863 / T)).